An 82-amino-acid polypeptide reads, in one-letter code: uncharacterized protein (82 aa).

This is an uncharacterized protein from Sinorhizobium fredii (strain NBRC 101917 / NGR234).